We begin with the raw amino-acid sequence, 281 residues long: 3'-5' exonuclease Snipper (281 aa).

A disordered region spans residues 19-52 (DGARPDPNNDPEESFNEDEVTEANSVPAKSKKSR). Acidic residues predominate over residues 27-39 (NDPEESFNEDEVT). One can recognise an Exonuclease domain in the interval 64–262 (YVIAVDFEAT…MCKMVRDGAL (199 aa)). Aspartate 69 and glutamate 71 together coordinate Mg(2+). Residue glutamate 71 is the Proton acceptor of the active site. AMP is bound by residues glutamate 71 and alanine 72. Aspartate 183 is a Mg(2+) binding site. Catalysis depends on histidine 240, which acts as the Proton acceptor. AMP is bound at residue histidine 240. Aspartate 245 serves as a coordination point for Mg(2+).

Belongs to the ERI2 family. Mg(2+) serves as cofactor.

It localises to the cytoplasm. The protein resides in the nucleus. It is found in the nucleolus. In terms of biological role, a broad-specificity exonuclease, capable of degrading both structure-specific DNA and RNA targets without sequence specificity in vitro. Requires two to five unpaired nucleotides in the 3' region for efficient binding and nuclease activity. Binds with higher affinity to RNA and DNA stem-loop substrates compared to single-stranded substrate. Binds to the 3'-end of histone mRNAs and degrades them, suggesting that it might play a role in histone mRNA decay after replication. Can readily cleave the histone stem-loop RNA beyond the -12 (UUU) position in the loop to produce -14 and then -16 oligonucleotide fragments for both the stem-loop and the reverse stem-loop. Cleaves both the single-stranded 3' flank as well as the double-stranded stem portion of histone stem-loop RNA. Might affect histone mRNA 3' processing thereby regulating histone protein expression. Has an important role in development and tissue formation. Might have a role in 5.8S rRNA precursor processing. The protein is 3'-5' exonuclease Snipper of Drosophila melanogaster (Fruit fly).